Reading from the N-terminus, the 251-residue chain is MLAELNAEVLENTYISGNLYRLTLRIPDKILKQIEPGHFAMIKPSDTYDPMGRRAFAVADIEEHKAVFYYDVYGKGTYLLSKRKPGERLKTFLPLGKRLFSYEGDKHLLIGGGVGLAGLTLLAKKLRDMGKKVFIAYGGRSREHLGMVEWLEKEEFPYELFTNDGSAGRKGFVTEILKEFSTDWVVHACGPKPMLKTIKEMKTGHKVYFSLEERMACGWGVCLGCVVKTRDGKFKRVCYEGPVMPMEEVIL.

One can recognise an FAD-binding FR-type domain in the interval 2–101; it reads LAELNAEVLE…FLPLGKRLFS (100 aa). Residues cysteine 217, cysteine 222, cysteine 225, and cysteine 238 each contribute to the [2Fe-2S] cluster site.

The protein belongs to the PyrK family. It depends on [2Fe-2S] cluster as a cofactor. FAD serves as cofactor.

The polypeptide is Dihydroorotate dehydrogenase B (NAD(+)), electron transfer subunit homolog (Aquifex aeolicus (strain VF5)).